The primary structure comprises 174 residues: Repair DNA polymerase X (174 aa).

Positions 42-51 (REEKMLNDVD) are involved in ssDNA binding. Aspartate 49 and aspartate 51 together coordinate Mg(2+). Cysteine 81 and cysteine 86 are disulfide-bonded. Residue aspartate 100 coordinates Mg(2+).

It belongs to the DNA polymerase type-X family. Mg(2+) serves as cofactor.

It localises to the virion. The enzyme catalyses DNA(n) + a 2'-deoxyribonucleoside 5'-triphosphate = DNA(n+1) + diphosphate. In terms of biological role, error-prone polymerase lacking a proofreading 3'-5' exonuclease which catalyzes the gap-filling reaction during the DNA repair process. Specifically binds intermediates in the single-nucleotide base-excision repair process. Also catalyzes DNA polymerization with low nucleotide-insertion fidelity. Probably acts as a strategic DNA mutase, which gives rise to a rapid emergence of variants. Generates mismatched G-G pairs, in that case, the polymerase first binds the deoxynucleotide followed by mismatch formation. Together with the viral DNA ligase, fills the single nucleotide gaps generated by the AP endonuclease. Binds DNA with high affinity via the helix alphaE. In Ornithodoros (relapsing fever ticks), this protein is Repair DNA polymerase X.